The sequence spans 503 residues: Proton-coupled zinc antiporter SLC30A1 (503 aa).

Residues 1–10 lie on the Cytoplasmic side of the membrane; the sequence is MGCWGRNRGR. The chain crosses the membrane as a helical span at residues 11-31; that stretch reads LLCMLLLTFMFMVLEVVVSRV. Over 32 to 35 the chain is Extracellular; it reads TASL. A helical transmembrane segment spans residues 36–56; the sequence is AMLSDSFHMLSDVLALVVALV. Residues H43 and D47 each contribute to the Zn(2+) site. At 57-78 the chain is on the cytoplasmic side; the sequence is AERFARRTHATQKNTFGWIRAE. A helical transmembrane segment spans residues 79–99; sequence VMGALVNAIFLTGLCFAILLE. The Extracellular segment spans residues 100–113; sequence AVERFIEPHEMQQP. A helical transmembrane segment spans residues 114–134; it reads LVVLSVGVAGLLVNVLGLCLF. At 135 to 243 the chain is on the cytoplasmic side; that stretch reads HHHSGEGQGA…RAGQLNMRGV (109 aa). The tract at residues 140-213 is disordered; that stretch reads EGQGAGHGHS…PEKLRSDDPV (74 aa). Residues 145–156 form a 6 X 2 AA approximate repeats of H-G region; the sequence is GHGHSHGHGHGH. The span at 147 to 165 shows a compositional bias: basic residues; sequence GHSHGHGHGHLAKGARKAG. Positions 184–196 are enriched in polar residues; the sequence is TNTLVANTSNSNG. Over residues 200-211 the composition is skewed to basic and acidic residues; sequence DQAEPEKLRSDD. A helical transmembrane segment spans residues 244–264; sequence FLHVLGDALGSVIVVVNALVF. The Zn(2+) site is built by H246 and D250. Over 265-303 the chain is Extracellular; sequence YFNWKGCTEDDFCTNPCFPDPCKSSVEIINSTQAPMRDA. N294 is a glycosylation site (N-linked (GlcNAc...) asparagine). Residues 304 to 324 traverse the membrane as a helical segment; sequence GPCWVLYLDPTLCIIMVCILL. The Cytoplasmic portion of the chain corresponds to 325–503; the sequence is YTTYPLLKES…VPNKQPESSL (179 aa). Phosphoserine is present on S502.

It belongs to the cation diffusion facilitator (CDF) transporter (TC 2.A.4) family. SLC30A subfamily. In terms of assembly, homodimer. Interacts with TMEM163. Interacts and forms a complex with TMC6 and TMC8; the interaction regulates zinc transport into the ER. Widely expressed.

The protein localises to the cell membrane. It localises to the basolateral cell membrane. It is found in the cytoplasmic vesicle membrane. The protein resides in the cytoplasm. Its subcellular location is the endoplasmic reticulum membrane. The protein localises to the golgi apparatus membrane. It localises to the nucleus membrane. It carries out the reaction Zn(2+)(in) + 2 H(+)(out) = Zn(2+)(out) + 2 H(+)(in). Zinc ion:proton antiporter that could function at the plasma membrane mediating zinc efflux from cells against its electrochemical gradient protecting them from intracellular zinc accumulation and toxicity. Alternatively, could prevent the transport to the plasma membrane of CACNB2, the L-type calcium channels regulatory subunit, through a yet to be defined mechanism. By modulating the expression of these channels at the plasma membrane, could prevent calcium and zinc influx into cells. By the same mechanism, could also prevent L-type calcium channels-mediated heavy metal influx into cells. In some cells, could also function as a zinc ion:proton antiporter mediating zinc entry into the lumen of cytoplasmic vesicles. In macrophages, can increase zinc ions concentration into the lumen of cytoplasmic vesicles containing engulfed bacteria and could help inactivate them. Forms a complex with TMC6/EVER1 and TMC8/EVER2 at the ER membrane of keratynocytes which facilitates zinc uptake into the ER. Down-regulates the activity of transcription factors induced by zinc and cytokines. This chain is Proton-coupled zinc antiporter SLC30A1, found in Mus musculus (Mouse).